The chain runs to 175 residues: Universal stress protein A-like protein (175 aa).

AMP contacts are provided by Ala-11, Val-12, Asn-13, Ser-26, Cys-27, Val-53, Gly-131, Arg-133, Thr-145, Val-146, and Ser-147.

It belongs to the universal stress protein A family. Homohexamer.

This chain is Universal stress protein A-like protein, found in Arabidopsis thaliana (Mouse-ear cress).